The primary structure comprises 558 residues: Protein NRT1/ PTR FAMILY 2.7 (558 aa).

12 helical membrane passes run 31-51 (FMIA…LNLI), 63-83 (IAAA…PAVA), 90-110 (FFGT…GVAL), 140-162 (LGVL…FTLA), 178-198 (FFNW…TAIV), 204-224 (ISWT…FLVF), 319-339 (IIPL…QLSL), 357-377 (IPAG…IIVN), 399-419 (VGIG…VEAK), 440-460 (VLWL…HFPG), 479-499 (SITS…IDLI), and 518-538 (VYWI…VCSW).

The protein belongs to the major facilitator superfamily. Proton-dependent oligopeptide transporter (POT/PTR) (TC 2.A.17) family. As to expression, expressed in shoots and in the cortex of mature roots. Not expressed in root tip meristematic cells.

Its subcellular location is the cell membrane. Transporter involved in a passive nitrate efflux. Not competent for chloride transport. The protein is Protein NRT1/ PTR FAMILY 2.7 (NPF2.7) of Arabidopsis thaliana (Mouse-ear cress).